The chain runs to 167 residues: Ureidoglycolate lyase (167 aa).

It belongs to the ureidoglycolate lyase family. As to quaternary structure, homodimer. Ni(2+) is required as a cofactor.

The enzyme catalyses (S)-ureidoglycolate = urea + glyoxylate. It functions in the pathway nitrogen metabolism; (S)-allantoin degradation. Its function is as follows. Catalyzes the catabolism of the allantoin degradation intermediate (S)-ureidoglycolate, generating urea and glyoxylate. Involved in the utilization of allantoin as nitrogen source. The polypeptide is Ureidoglycolate lyase (Pseudomonas fluorescens (strain Pf0-1)).